The sequence spans 148 residues: Deoxyuridine 5'-triphosphate nucleotidohydrolase (148 aa).

Substrate is bound by residues 67 to 69 (RSG), N80, 84 to 86 (LID), and M94.

Belongs to the dUTPase family. The cofactor is Mg(2+).

The catalysed reaction is dUTP + H2O = dUMP + diphosphate + H(+). It participates in pyrimidine metabolism; dUMP biosynthesis; dUMP from dCTP (dUTP route): step 2/2. In terms of biological role, this enzyme is involved in nucleotide metabolism: it produces dUMP, the immediate precursor of thymidine nucleotides and it decreases the intracellular concentration of dUTP so that uracil cannot be incorporated into DNA. This is Deoxyuridine 5'-triphosphate nucleotidohydrolase from Burkholderia ambifaria (strain ATCC BAA-244 / DSM 16087 / CCUG 44356 / LMG 19182 / AMMD) (Burkholderia cepacia (strain AMMD)).